A 54-amino-acid polypeptide reads, in one-letter code: Large ribosomal subunit protein bL33 (54 aa).

It belongs to the bacterial ribosomal protein bL33 family.

This Corynebacterium urealyticum (strain ATCC 43042 / DSM 7109) protein is Large ribosomal subunit protein bL33.